The following is a 366-amino-acid chain: MADLKKTPLYGEHVAAGAKMVEFGGWLMPVQYSSIIEEHQRVRNCAGLFDVSHMGEITIKGPDALALVQKLLTNDADRATGDRVIYSPMCYPDGGVVDDLLVYPRGEGEYLLVVNAGNIDKDFAWIQENASGFRVEVSNISAATAQLALQGPRALEILRPLTRVDLASLGYYRWTEGQVLGVHCLISRTGYTGEDGFELYFEAAAAPTMWRNILAAGREAGLVPAGLGARDTLRLEAALPLYGHELGPDISPLEAGLHRFVRLEKGEFNGREALAAQREAGVRRQLVGLTMIDRGIPRPEYPVLAAGKEIGYVTSGSLAPTLGQNIALALVAAGTVSTGGEVEVSIRGRVNRARVVKLPFYRRPKK.

This sequence belongs to the GcvT family. The glycine cleavage system is composed of four proteins: P, T, L and H.

The catalysed reaction is N(6)-[(R)-S(8)-aminomethyldihydrolipoyl]-L-lysyl-[protein] + (6S)-5,6,7,8-tetrahydrofolate = N(6)-[(R)-dihydrolipoyl]-L-lysyl-[protein] + (6R)-5,10-methylene-5,6,7,8-tetrahydrofolate + NH4(+). In terms of biological role, the glycine cleavage system catalyzes the degradation of glycine. The sequence is that of Aminomethyltransferase from Moorella thermoacetica (strain ATCC 39073 / JCM 9320).